Consider the following 320-residue polypeptide: ATP phosphoribosyltransferase (320 aa).

Belongs to the ATP phosphoribosyltransferase family. Long subfamily. Mg(2+) serves as cofactor.

Its subcellular location is the cytoplasm. It carries out the reaction 1-(5-phospho-beta-D-ribosyl)-ATP + diphosphate = 5-phospho-alpha-D-ribose 1-diphosphate + ATP. The protein operates within amino-acid biosynthesis; L-histidine biosynthesis; L-histidine from 5-phospho-alpha-D-ribose 1-diphosphate: step 1/9. Its activity is regulated as follows. Feedback inhibited by histidine. Catalyzes the condensation of ATP and 5-phosphoribose 1-diphosphate to form N'-(5'-phosphoribosyl)-ATP (PR-ATP). Has a crucial role in the pathway because the rate of histidine biosynthesis seems to be controlled primarily by regulation of HisG enzymatic activity. The protein is ATP phosphoribosyltransferase (hisG) of Caulobacter vibrioides (strain ATCC 19089 / CIP 103742 / CB 15) (Caulobacter crescentus).